The following is a 262-amino-acid chain: Inactive snake venom serine proteinase 13 (262 aa).

An N-terminal signal peptide occupies residues 1–18 (MGLIRVLANLLILQLSYA). Positions 19-24 (QKSSEL) are excised as a propeptide. In terms of domain architecture, Peptidase S1 spans 25–250 (VIGGDECNIN…HLDWIQSIIA (226 aa)). Cystine bridges form between Cys31–Cys162, Cys49–Cys65, Cys97–Cys257, Cys141–Cys211, Cys173–Cys190, and Cys201–Cys226. Residues Asn78, Asn102, and Asn153 are each glycosylated (N-linked (GlcNAc...) asparagine).

Belongs to the peptidase S1 family. Snake venom subfamily. In terms of assembly, monomer. As to expression, expressed by the venom gland.

The protein resides in the secreted. This chain is Inactive snake venom serine proteinase 13, found in Crotalus adamanteus (Eastern diamondback rattlesnake).